The following is a 1108-amino-acid chain: Probable E3 ubiquitin ligase SUD1 (1108 aa).

The interval 1 to 60 is disordered; sequence MEISPADSLSISGAAASEVVSEPSVSSSSSSSSPNQASPNPFSNMDPAVSTATGSRYVDD. A compositionally biased stretch (low complexity) spans 10–44; the sequence is SISGAAASEVVSEPSVSSSSSSSSPNQASPNPFSN. The RING-CH-type zinc finger occupies 60–121; that stretch reads DDEDEEDVCR…EVCKHPFSFS (62 aa). Positions 68, 71, 85, 87, 95, 98, 111, and 114 each coordinate Zn(2+). The next 2 membrane-spanning stretches (helical) occupy residues 157-177 and 197-217; these read FVLSVWLLTIPFITFWIWRLA and VILTDCLHGFLLSASIVFIFL. Positions 237–246 are enriched in basic and acidic residues; the sequence is ERDDDVDRNG. Residues 237–273 form a disordered region; it reads ERDDDVDRNGARAARRPAGQANRNLAGEGNGEDAGDQ. The stretch at 286–308 forms a coiled coil; it reads ENVLARLDIQAARLEAQVEQMFD. 8 consecutive transmembrane segments (helical) span residues 339–359, 362–382, 462–482, 489–509, 525–545, 572–592, 630–650, and 669–689; these read FTVLASNMIFLGVVIFVPFTL, IILYHVSWLFAAARGPAVAAS, AVGYMFIVFLVFLYLGIIALI, PLTVGRFYGIASIVEAVPSLL, VAFLLVIELGVFPLMCGWWLD, LVHWVVGIMYMLQISIFVSLL, VLLSVAVYGSLIVMLVFLPVK, and PFTEIPADMLLFQICIPFIIE. A disordered region spans residues 762-784; it reads PNRSRLRAGNVNTGEEYEDDDEQ. 6 consecutive transmembrane segments (helical) span residues 796 to 816, 844 to 864, 894 to 914, 923 to 943, 982 to 1002, and 1017 to 1036; these read IILLLLVAWVTLLLFNSALIV, YAFVIGTYAFWTTISGARYAI, AIWVFIIPVLIGLLFELLVIV, SPVFLLYQDWALGLIFLKIWT, EIVFPIVMKLLTALCVPYVLA, and SAVYRFAWIGCLSVSLFCFC.

Expressed in cotyledons, leaves, roots, stems, inflorescences and siliques. Expression higher at the top than at the base of the stem.

It localises to the membrane. It catalyses the reaction S-ubiquitinyl-[E2 ubiquitin-conjugating enzyme]-L-cysteine + [acceptor protein]-L-lysine = [E2 ubiquitin-conjugating enzyme]-L-cysteine + N(6)-ubiquitinyl-[acceptor protein]-L-lysine.. Its pathway is protein modification; protein ubiquitination. Probable E3 ubiquitin ligase acting as a positive post-transcriptional regulator of 3-hydroxy-3-methylglutaryl-coenzyme A reductase activity. Might be involved in the quality control that degrades misfolded proteins. The polypeptide is Probable E3 ubiquitin ligase SUD1 (SUD1) (Arabidopsis thaliana (Mouse-ear cress)).